Here is a 319-residue protein sequence, read N- to C-terminus: Beta-ketoacyl-[acyl-carrier-protein] synthase III (319 aa).

Residues Cys-115 and His-246 contribute to the active site. Positions 247 to 251 (QANLR) are ACP-binding. Asn-276 is an active-site residue.

Belongs to the thiolase-like superfamily. FabH family. Homodimer.

Its subcellular location is the cytoplasm. It catalyses the reaction malonyl-[ACP] + acetyl-CoA + H(+) = 3-oxobutanoyl-[ACP] + CO2 + CoA. It functions in the pathway lipid metabolism; fatty acid biosynthesis. Catalyzes the condensation reaction of fatty acid synthesis by the addition to an acyl acceptor of two carbons from malonyl-ACP. Catalyzes the first condensation reaction which initiates fatty acid synthesis and may therefore play a role in governing the total rate of fatty acid production. Possesses both acetoacetyl-ACP synthase and acetyl transacylase activities. Its substrate specificity determines the biosynthesis of branched-chain and/or straight-chain of fatty acids. The sequence is that of Beta-ketoacyl-[acyl-carrier-protein] synthase III from Coxiella burnetii (strain RSA 331 / Henzerling II).